The primary structure comprises 134 residues: DNA-binding protein H-NS (134 aa).

The DNA-binding element occupies 111 to 116 (QGRTLA).

It belongs to the histone-like protein H-NS family. As to quaternary structure, homodimer that oligomerizes on DNA into higher-order complexes that form bridges between disparate regions of DNA compacting it. Interacts with YmoA and other similar proteins.

The protein localises to the cytoplasm. Its subcellular location is the nucleoid. Functionally, a DNA-binding protein implicated in transcriptional repression and chromosome organization and compaction. Binds nucleation sites in AT-rich DNA and bridges them, forming higher-order nucleoprotein complexes and condensing the chromosome. As many horizontally transferred genes are AT-rich, it plays a central role in silencing foreign genes. A subset of genes are repressed by H-NS in association with other proteins. This Proteus vulgaris protein is DNA-binding protein H-NS (hns).